A 268-amino-acid polypeptide reads, in one-letter code: Enoyl-[acyl-carrier-protein] reductase [NADH] 2 (268 aa).

Residues G14, 20–21 (SI), Q41, 65–66 (DV), and I93 each bind NAD(+). Active-site proton acceptor residues include Y146 and Y156. Residues K163 and 192-196 (IRTLA) contribute to the NAD(+) site.

Belongs to the short-chain dehydrogenases/reductases (SDR) family. FabI subfamily.

The protein localises to the cell inner membrane. The enzyme catalyses a 2,3-saturated acyl-[ACP] + NAD(+) = a (2E)-enoyl-[ACP] + NADH + H(+). It participates in lipid metabolism; fatty acid biosynthesis. The chain is Enoyl-[acyl-carrier-protein] reductase [NADH] 2 (fabI2) from Rhizobium meliloti (strain 1021) (Ensifer meliloti).